A 114-amino-acid polypeptide reads, in one-letter code: T cell receptor beta variable 27 (114 aa).

The signal sequence occupies residues 1–21; sequence MGPQLLGYVVLCLLGAGPLEA. Positions 22-114 constitute an Ig-like domain; that stretch reads QVTQNPRYLI…TSLYFCASSL (93 aa). C42 and C110 are oxidised to a cystine. An N-linked (GlcNAc...) asparagine glycan is attached at N103.

In terms of assembly, alpha-beta TR is a heterodimer composed of an alpha and beta chain; disulfide-linked. The alpha-beta TR is associated with the transmembrane signaling CD3 coreceptor proteins to form the TR-CD3 (TcR or TCR). The assembly of alpha-beta TR heterodimers with CD3 occurs in the endoplasmic reticulum where a single alpha-beta TR heterodimer associates with one CD3D-CD3E heterodimer, one CD3G-CD3E heterodimer and one CD247 homodimer forming a stable octameric structure. CD3D-CD3E and CD3G-CD3E heterodimers preferentially associate with TR alpha and TR beta chains, respectively. The association of the CD247 homodimer is the last step of TcR assembly in the endoplasmic reticulum and is required for transport to the cell surface.

It is found in the cell membrane. In terms of biological role, v region of the variable domain of T cell receptor (TR) beta chain that participates in the antigen recognition. Alpha-beta T cell receptors are antigen specific receptors which are essential to the immune response and are present on the cell surface of T lymphocytes. Recognize peptide-major histocompatibility (MH) (pMH) complexes that are displayed by antigen presenting cells (APC), a prerequisite for efficient T cell adaptive immunity against pathogens. Binding of alpha-beta TR to pMH complex initiates TR-CD3 clustering on the cell surface and intracellular activation of LCK that phosphorylates the ITAM motifs of CD3G, CD3D, CD3E and CD247 enabling the recruitment of ZAP70. In turn ZAP70 phosphorylates LAT, which recruits numerous signaling molecules to form the LAT signalosome. The LAT signalosome propagates signal branching to three major signaling pathways, the calcium, the mitogen-activated protein kinase (MAPK) kinase and the nuclear factor NF-kappa-B (NF-kB) pathways, leading to the mobilization of transcription factors that are critical for gene expression and essential for T cell growth and differentiation. The T cell repertoire is generated in the thymus, by V-(D)-J rearrangement. This repertoire is then shaped by intrathymic selection events to generate a peripheral T cell pool of self-MH restricted, non-autoaggressive T cells. Post-thymic interaction of alpha-beta TR with the pMH complexes shapes TR structural and functional avidity. In Homo sapiens (Human), this protein is T cell receptor beta variable 27.